Consider the following 108-residue polypeptide: uncharacterized protein (108 aa).

This is an uncharacterized protein from Enterobacteria phage T4 (Bacteriophage T4).